Reading from the N-terminus, the 214-residue chain is Cytochrome b (214 aa).

The next 4 membrane-spanning stretches (helical) occupy residues 31–51 (FGSMLLSCLMIQIATGFFLAI), 75–96 (WIMQNTHAIGASLFFICIYIHI), 111–131 (WLSGTTLLIILMATAFFGYVL), and 176–196 (FFALHFILPFAIISLSSLHIL). Heme b contacts are provided by H81 and H95. Heme b contacts are provided by H180 and H194. H199 is an a ubiquinone binding site.

Belongs to the cytochrome b family. The cytochrome bc1 complex contains 3 respiratory subunits (MT-CYB, CYC1 and UQCRFS1), 2 core proteins (UQCRC1 and UQCRC2) and probably 6 low-molecular weight proteins. Heme b serves as cofactor.

The protein localises to the mitochondrion inner membrane. Component of the ubiquinol-cytochrome c reductase complex (complex III or cytochrome b-c1 complex) that is part of the mitochondrial respiratory chain. The b-c1 complex mediates electron transfer from ubiquinol to cytochrome c. Contributes to the generation of a proton gradient across the mitochondrial membrane that is then used for ATP synthesis. The polypeptide is Cytochrome b (MT-CYB) (Crotalus atrox (Western diamondback rattlesnake)).